Reading from the N-terminus, the 445-residue chain is Methionine aminopeptidase 2-3 (445 aa).

Positions 14–115 (ISDADANGAD…ENRYRTTSEE (102 aa)) are disordered. Positions 38 to 47 (EDDDSDDDVA) are enriched in acidic residues. The segment covering 60–75 (AKKKKNKKRKPKKKQP) has biased composition (basic residues). Positions 85-95 (PLSQLFPNNTY) are enriched in polar residues. Over residues 97–115 (KGEEVEYKDENRYRTTSEE) the composition is skewed to basic and acidic residues. H198 lines the substrate pocket. Residues D218, D229, and H298 each contribute to the a divalent metal cation site. Residue H306 participates in substrate binding. Residues E331 and E426 each contribute to the a divalent metal cation site.

The protein belongs to the peptidase M24A family. Methionine aminopeptidase eukaryotic type 2 subfamily. It depends on Co(2+) as a cofactor. Zn(2+) is required as a cofactor. Mn(2+) serves as cofactor. Requires Fe(2+) as cofactor.

The protein resides in the cytoplasm. It carries out the reaction Release of N-terminal amino acids, preferentially methionine, from peptides and arylamides.. In terms of biological role, cotranslationally removes the N-terminal methionine from nascent proteins. The N-terminal methionine is often cleaved when the second residue in the primary sequence is small and uncharged (Met-Ala-, Cys, Gly, Pro, Ser, Thr, or Val). This Neosartorya fischeri (strain ATCC 1020 / DSM 3700 / CBS 544.65 / FGSC A1164 / JCM 1740 / NRRL 181 / WB 181) (Aspergillus fischerianus) protein is Methionine aminopeptidase 2-3.